The primary structure comprises 397 residues: Ornithine aminotransferase (397 aa).

Position 255 is an N6-(pyridoxal phosphate)lysine (Lys255).

Belongs to the class-III pyridoxal-phosphate-dependent aminotransferase family. OAT subfamily. Requires pyridoxal 5'-phosphate as cofactor.

It localises to the cytoplasm. The enzyme catalyses a 2-oxocarboxylate + L-ornithine = L-glutamate 5-semialdehyde + an L-alpha-amino acid. It functions in the pathway amino-acid biosynthesis; L-proline biosynthesis; L-glutamate 5-semialdehyde from L-ornithine: step 1/1. Functionally, catalyzes the interconversion of ornithine to glutamate semialdehyde. This Macrococcus caseolyticus (strain JCSC5402) (Macrococcoides caseolyticum) protein is Ornithine aminotransferase.